Consider the following 210-residue polypeptide: 23 kDa jasmonate-induced protein (210 aa).

The protein belongs to the jasmonate-induced protein family.

This chain is 23 kDa jasmonate-induced protein, found in Hordeum vulgare (Barley).